The following is a 263-amino-acid chain: MKPTTIALLQKCKQEKKRFATITAYDYSFARLFADEGINVMLVGDSLGMTVQGHDSTLPVTVEDIAYHTRAVRRGAPNCLLLSDLPFMAYATPEQAFENAAVVMRAGANMVKIEGGAWLVDTVKMLTERAVPVCGHLGLTPQSVNIFGGYKIQGRGDAGQVLLDDALALEAAGAQLLVLECVPVELAKRVTEALSIPVIGIGAGNVTDGQILVMHDAFGITGGHIPKFAKNFLAEAGDMRAAVRQYIAEVESSVYPGEEHSFH.

Mg(2+) is bound by residues Asp45 and Asp84. 3-methyl-2-oxobutanoate-binding positions include 45–46 (DS), Asp84, and Lys112. Residue Glu114 coordinates Mg(2+). The active-site Proton acceptor is the Glu180.

This sequence belongs to the PanB family. As to quaternary structure, homodecamer; pentamer of dimers. It depends on Mg(2+) as a cofactor.

The protein resides in the cytoplasm. It catalyses the reaction 3-methyl-2-oxobutanoate + (6R)-5,10-methylene-5,6,7,8-tetrahydrofolate + H2O = 2-dehydropantoate + (6S)-5,6,7,8-tetrahydrofolate. The protein operates within cofactor biosynthesis; (R)-pantothenate biosynthesis; (R)-pantoate from 3-methyl-2-oxobutanoate: step 1/2. Functionally, catalyzes the reversible reaction in which hydroxymethyl group from 5,10-methylenetetrahydrofolate is transferred onto alpha-ketoisovalerate to form ketopantoate. The chain is 3-methyl-2-oxobutanoate hydroxymethyltransferase from Citrobacter koseri (strain ATCC BAA-895 / CDC 4225-83 / SGSC4696).